The primary structure comprises 245 residues: 1-(5-phosphoribosyl)-5-[(5-phosphoribosylamino)methylideneamino] imidazole-4-carboxamide isomerase (245 aa).

D8 (proton acceptor) is an active-site residue. D131 functions as the Proton donor in the catalytic mechanism.

This sequence belongs to the HisA/HisF family.

The protein resides in the cytoplasm. It catalyses the reaction 1-(5-phospho-beta-D-ribosyl)-5-[(5-phospho-beta-D-ribosylamino)methylideneamino]imidazole-4-carboxamide = 5-[(5-phospho-1-deoxy-D-ribulos-1-ylimino)methylamino]-1-(5-phospho-beta-D-ribosyl)imidazole-4-carboxamide. It participates in amino-acid biosynthesis; L-histidine biosynthesis; L-histidine from 5-phospho-alpha-D-ribose 1-diphosphate: step 4/9. This chain is 1-(5-phosphoribosyl)-5-[(5-phosphoribosylamino)methylideneamino] imidazole-4-carboxamide isomerase, found in Neisseria gonorrhoeae (strain NCCP11945).